We begin with the raw amino-acid sequence, 322 residues long: Phosphatidylserine decarboxylase proenzyme (322 aa).

Active-site charge relay system; for autoendoproteolytic cleavage activity residues include aspartate 90, histidine 147, and serine 254. The active-site Schiff-base intermediate with substrate; via pyruvic acid; for decarboxylase activity is serine 254. A Pyruvic acid (Ser); by autocatalysis modification is found at serine 254. Residues 293-322 form a disordered region; it reads PDAEPAPLPAEEIEAEHDASPLVDDKKDQV. Basic and acidic residues predominate over residues 308–322; that stretch reads EHDASPLVDDKKDQV.

The protein belongs to the phosphatidylserine decarboxylase family. PSD-B subfamily. Prokaryotic type I sub-subfamily. In terms of assembly, heterodimer of a large membrane-associated beta subunit and a small pyruvoyl-containing alpha subunit. Pyruvate serves as cofactor. Post-translationally, is synthesized initially as an inactive proenzyme. Formation of the active enzyme involves a self-maturation process in which the active site pyruvoyl group is generated from an internal serine residue via an autocatalytic post-translational modification. Two non-identical subunits are generated from the proenzyme in this reaction, and the pyruvate is formed at the N-terminus of the alpha chain, which is derived from the carboxyl end of the proenzyme. The autoendoproteolytic cleavage occurs by a canonical serine protease mechanism, in which the side chain hydroxyl group of the serine supplies its oxygen atom to form the C-terminus of the beta chain, while the remainder of the serine residue undergoes an oxidative deamination to produce ammonia and the pyruvoyl prosthetic group on the alpha chain. During this reaction, the Ser that is part of the protease active site of the proenzyme becomes the pyruvoyl prosthetic group, which constitutes an essential element of the active site of the mature decarboxylase.

The protein localises to the cell membrane. The catalysed reaction is a 1,2-diacyl-sn-glycero-3-phospho-L-serine + H(+) = a 1,2-diacyl-sn-glycero-3-phosphoethanolamine + CO2. It functions in the pathway phospholipid metabolism; phosphatidylethanolamine biosynthesis; phosphatidylethanolamine from CDP-diacylglycerol: step 2/2. Its function is as follows. Catalyzes the formation of phosphatidylethanolamine (PtdEtn) from phosphatidylserine (PtdSer). The chain is Phosphatidylserine decarboxylase proenzyme from Escherichia coli O139:H28 (strain E24377A / ETEC).